Consider the following 308-residue polypeptide: Ribosomal RNA large subunit methyltransferase F (308 aa).

This sequence belongs to the methyltransferase superfamily. METTL16/RlmF family.

Its subcellular location is the cytoplasm. It carries out the reaction adenosine(1618) in 23S rRNA + S-adenosyl-L-methionine = N(6)-methyladenosine(1618) in 23S rRNA + S-adenosyl-L-homocysteine + H(+). Functionally, specifically methylates the adenine in position 1618 of 23S rRNA. This is Ribosomal RNA large subunit methyltransferase F from Salmonella agona (strain SL483).